The following is a 257-amino-acid chain: Imidazole glycerol phosphate synthase subunit HisF (257 aa).

Catalysis depends on residues aspartate 11 and aspartate 130.

This sequence belongs to the HisA/HisF family. Heterodimer of HisH and HisF.

It localises to the cytoplasm. The enzyme catalyses 5-[(5-phospho-1-deoxy-D-ribulos-1-ylimino)methylamino]-1-(5-phospho-beta-D-ribosyl)imidazole-4-carboxamide + L-glutamine = D-erythro-1-(imidazol-4-yl)glycerol 3-phosphate + 5-amino-1-(5-phospho-beta-D-ribosyl)imidazole-4-carboxamide + L-glutamate + H(+). Its pathway is amino-acid biosynthesis; L-histidine biosynthesis; L-histidine from 5-phospho-alpha-D-ribose 1-diphosphate: step 5/9. Functionally, IGPS catalyzes the conversion of PRFAR and glutamine to IGP, AICAR and glutamate. The HisF subunit catalyzes the cyclization activity that produces IGP and AICAR from PRFAR using the ammonia provided by the HisH subunit. This Shewanella woodyi (strain ATCC 51908 / MS32) protein is Imidazole glycerol phosphate synthase subunit HisF.